The sequence spans 753 residues: 5-methyltetrahydropteroyltriglutamate--homocysteine methyltransferase (753 aa).

5-methyltetrahydropteroyltri-L-glutamate is bound by residues 19-22 (RELK) and arginine 113. L-homocysteine contacts are provided by residues 430–432 (IGS) and glutamate 483. Residues 430–432 (IGS) and glutamate 483 each bind L-methionine. 5-methyltetrahydropteroyltri-L-glutamate contacts are provided by residues 514 to 515 (RC) and tryptophan 560. Aspartate 598 provides a ligand contact to L-homocysteine. L-methionine is bound at residue aspartate 598. Residue glutamate 604 coordinates 5-methyltetrahydropteroyltri-L-glutamate. Zn(2+) contacts are provided by histidine 640, cysteine 642, and glutamate 664. The active-site Proton donor is histidine 693. Cysteine 725 is a binding site for Zn(2+).

It belongs to the vitamin-B12 independent methionine synthase family. Requires Zn(2+) as cofactor.

The enzyme catalyses 5-methyltetrahydropteroyltri-L-glutamate + L-homocysteine = tetrahydropteroyltri-L-glutamate + L-methionine. It participates in amino-acid biosynthesis; L-methionine biosynthesis via de novo pathway; L-methionine from L-homocysteine (MetE route): step 1/1. Functionally, catalyzes the transfer of a methyl group from 5-methyltetrahydrofolate to homocysteine resulting in methionine formation. The sequence is that of 5-methyltetrahydropteroyltriglutamate--homocysteine methyltransferase from Rhodococcus jostii (strain RHA1).